The chain runs to 393 residues: Putative odorant receptor 69a, isoform B (393 aa).

Over 1 to 39 (MQLEDFMRYPDLVCQAAQLPRYTWNGRRSLEVKRNLAKR) the chain is Cytoplasmic. A helical membrane pass occupies residues 40-60 (IIFWLGAVNLVYHNIGCVMYG). At 61 to 69 (YFGDGRTKD) the chain is on the extracellular side. A helical transmembrane segment spans residues 70-90 (PIAYLAELASVASMLGFTIVG). Over 91-138 (TLNLWKMLSLKTHFENLLNEFEELFQLIKHRAYRIHHYQEKYTRHIRN) the chain is Cytoplasmic. A helical membrane pass occupies residues 139–159 (TFIFHTSAVVYYNSLPILLMI). At 160–208 (REHFSNSQQLGYRIQSNTWYPWQVQGSIPGFFAAVACQIFSCQTNMCVN) the chain is on the extracellular side. Residues 209–229 (MFIQFLINFFGIQLEIHFDGL) traverse the membrane as a helical segment. Topologically, residues 230–269 (ARQLETIDARNPHAKDQLKYLIVYHTKLLNLADRVNRSFN) are cytoplasmic. The helical transmembrane segment at 270–290 (FTFLISLSVSMISNCFLAFSM) threads the bilayer. Residues 291 to 305 (TMFDFGTSLKHLLGL) lie on the Extracellular side of the membrane. Residues 306-326 (LLFITYNFSMCRSGTHLILTS) traverse the membrane as a helical segment. At 327-365 (GKVLPAAFYNNWYEGDLVYRRMLLILMMRATKPYMWKTY) the chain is on the cytoplasmic side. Residues 366 to 386 (KLAPVSITTYMATLKFSYQMF) traverse the membrane as a helical segment. The Extracellular segment spans residues 387-393 (TCVRSLK).

Belongs to the insect chemoreceptor superfamily. Heteromeric odorant receptor channel (TC 1.A.69) family. Or49a subfamily. Interacts with Orco. Complexes exist early in the endomembrane system in olfactory sensory neurons (OSNs), coupling these complexes to the conserved ciliary trafficking pathway. As to expression, expressed in olfactory sensory neurons in the antenna.

It localises to the cell membrane. Its function is as follows. Odorant receptor which mediates acceptance or avoidance behavior, depending on its substrates. The odorant receptor repertoire encodes a large collection of odor stimuli that vary widely in identity, intensity, and duration. May form a complex with Orco to form odorant-sensing units, providing sensitive and prolonged odorant signaling and calcium permeability. This Drosophila melanogaster (Fruit fly) protein is Putative odorant receptor 69a, isoform B (Or69a).